Here is a 473-residue protein sequence, read N- to C-terminus: Cysteine--tRNA ligase (473 aa).

Cys-28 provides a ligand contact to Zn(2+). The short motif at 30 to 40 (PTVYNYIHIGN) is the 'HIGH' region element. 3 residues coordinate Zn(2+): Cys-210, His-235, and Glu-239. Positions 267-271 (KMSKS) match the 'KMSKS' region motif. Residue Lys-270 coordinates ATP.

Belongs to the class-I aminoacyl-tRNA synthetase family. In terms of assembly, monomer. Zn(2+) is required as a cofactor.

The protein resides in the cytoplasm. It carries out the reaction tRNA(Cys) + L-cysteine + ATP = L-cysteinyl-tRNA(Cys) + AMP + diphosphate. This chain is Cysteine--tRNA ligase, found in Fusobacterium nucleatum subsp. nucleatum (strain ATCC 25586 / DSM 15643 / BCRC 10681 / CIP 101130 / JCM 8532 / KCTC 2640 / LMG 13131 / VPI 4355).